The primary structure comprises 602 residues: Pyranose dehydrogenase 1 (602 aa).

The first 25 residues, 1 to 25 (MLPRVTKLNSRLLSLALLGIQIARG), serve as a signal peptide directing secretion. A glycan (N-linked (GlcNAc...) asparagine) is linked at N100. H128 is subject to Tele-8alpha-FAD histidine. N200, N277, and N344 each carry an N-linked (GlcNAc...) asparagine glycan. The active-site Proton acceptor is H537. The active site involves H581.

This sequence belongs to the GMC oxidoreductase family. In terms of assembly, monomer. FAD serves as cofactor. In terms of processing, N-glycosylated.

Its subcellular location is the secreted. The catalysed reaction is pyranose + acceptor = pyranos-2-ulose + reduced acceptor.. It carries out the reaction pyranose + acceptor = pyranos-3-ulose + reduced acceptor.. The enzyme catalyses pyranose + acceptor = pyranos-2,3-diulose + reduced acceptor.. It catalyses the reaction a pyranoside + acceptor = a pyranosid-3-ulose + reduced acceptor.. The catalysed reaction is a pyranoside + acceptor = a pyranosid-3,4-diulose + reduced acceptor.. Functionally, catalyzes the single-oxidation or sequential double oxidation reaction of carbohydrates primarily at carbon-2 and/or carbon-3 with the concomitant reduction of the flavin. The enzyme exhibits a broad sugar substrate specificity, oxidizing different aldopyranoses to the corresponding C-1, C-2, C-3 or C-1,2, C-2,3 and C-3,4 (di)dehydro sugars with substrate-specific regioselectivity. Accepts only a narrow range of electron acceptors such as substituted benzoquinones and complexed metal ions and reacts extremely slowly with O(2) as acceptor. May play a role in the natural recycling of plant matter by oxidizing all major monosaccharides in lignocellulose and by reducing quinone compounds or reactive radical species generated during lignin depolymerization. The chain is Pyranose dehydrogenase 1 from Leucoagaricus meleagris (Western flat-topped agaric).